The chain runs to 198 residues: Carnitine operon protein CaiE (198 aa).

A disordered region spans residues 179-198; sequence VEENRPRLKGTTDVKPKSAQ. Residues 180–198 are compositionally biased toward basic and acidic residues; sequence EENRPRLKGTTDVKPKSAQ.

The protein belongs to the transferase hexapeptide repeat family.

It functions in the pathway amine and polyamine metabolism; carnitine metabolism. Overproduction of CaiE stimulates the activity of CaiB and CaiD. In Salmonella agona (strain SL483), this protein is Carnitine operon protein CaiE.